The primary structure comprises 124 residues: Fluoride-specific ion channel FluC 1 (124 aa).

4 consecutive transmembrane segments (helical) span residues 7–27 (ALTL…GGWV), 35–55 (FPWG…LLQG), 63–83 (LLLV…TLML), and 101–121 (IVGT…AGAW).

Belongs to the fluoride channel Fluc/FEX (TC 1.A.43) family.

The protein resides in the cell membrane. The catalysed reaction is fluoride(in) = fluoride(out). Functionally, fluoride-specific ion channel. Important for reducing fluoride concentration in the cell, thus reducing its toxicity. This chain is Fluoride-specific ion channel FluC 1, found in Rubrobacter xylanophilus (strain DSM 9941 / JCM 11954 / NBRC 16129 / PRD-1).